Consider the following 125-residue polypeptide: Fluoride-specific ion channel FluC (125 aa).

Transmembrane regions (helical) follow at residues Met1–Val21, Ala32–Ala52, Leu68–Ile88, and Ile101–Met121. Na(+) contacts are provided by Gly75 and Thr78.

This sequence belongs to the fluoride channel Fluc/FEX (TC 1.A.43) family.

The protein resides in the cell inner membrane. The enzyme catalyses fluoride(in) = fluoride(out). Na(+) is not transported, but it plays an essential structural role and its presence is essential for fluoride channel function. Its function is as follows. Fluoride-specific ion channel. Important for reducing fluoride concentration in the cell, thus reducing its toxicity. In Rhizobium etli (strain ATCC 51251 / DSM 11541 / JCM 21823 / NBRC 15573 / CFN 42), this protein is Fluoride-specific ion channel FluC.